The chain runs to 969 residues: Lateral signaling target protein 2 homolog (969 aa).

K87 participates in a covalent cross-link: Glycyl lysine isopeptide (Lys-Gly) (interchain with G-Cter in ubiquitin). Disordered regions lie at residues 290–323, 336–360, 390–437, and 715–777; these read QDGE…GVEE, SVWK…EEPI, STLL…YHDD, and RSEC…DMSE. Residues 295–310 show a composition bias toward polar residues; that stretch reads PTSSTNDPSASTGPDS. The span at 336-346 shows a compositional bias: basic and acidic residues; sequence SVWKEEEEKQV. Polar residues predominate over residues 391–402; the sequence is TLLSPPSQNQSP. A compositionally biased stretch (low complexity) spans 411–423; the sequence is GSSLEGSSATSST. Positions 715–729 are enriched in basic and acidic residues; that stretch reads RSECFGKQSKDDNRK. Composition is skewed to low complexity over residues 732–745 and 756–769; these read SSSQ…VPSS and SLSS…VSSL. Residues 899–959 form an FYVE-type zinc finger; the sequence is DEACNSCIAC…VCTHCYMFHV (61 aa). The Zn(2+) site is built by C905, C908, C921, C924, C929, C932, C951, and C954.

Belongs to the lst-2 family. Monoubiquitination at Lys-87 prevents binding to phosphatidylinositol 3-phosphate (PI3P) and localization to early endosome membranes.

The protein localises to the cytoplasm. It localises to the cytosol. Its subcellular location is the early endosome membrane. Negative regulator of epidermal growth factor receptor (EGFR) signaling. Acts by promoting EGFR degradation in endosomes when not monoubiquitinated. This chain is Lateral signaling target protein 2 homolog (zfyve28), found in Danio rerio (Zebrafish).